We begin with the raw amino-acid sequence, 189 residues long: GTP cyclohydrolase 1 (189 aa).

Zn(2+) is bound by residues Cys-78, His-81, and Cys-150.

The protein belongs to the GTP cyclohydrolase I family. As to quaternary structure, homomer.

It catalyses the reaction GTP + H2O = 7,8-dihydroneopterin 3'-triphosphate + formate + H(+). The protein operates within cofactor biosynthesis; 7,8-dihydroneopterin triphosphate biosynthesis; 7,8-dihydroneopterin triphosphate from GTP: step 1/1. The chain is GTP cyclohydrolase 1 from Lysinibacillus sphaericus (strain C3-41).